The following is a 236-amino-acid chain: MAATLLDVCAVVPAAGFGRRMQTECPKQYLSIGNKTILEHSVHALLAHPRVTRVVIAISLGDHRFAQLPLANHPQITVVDGGNERADSVLAGLQAVAKAQWVLVHDAARPCLHQDDLARLLAISENSRVGGILASPVRDTMKRGEPGKNAIAHTVERADLWHALTPQFFPRELLHDCLTRALNEGATITDEASALEYCGFHPALVEGRADNIKVTRPEDLALAEFYLTRTIHQEKA.

It belongs to the IspD/TarI cytidylyltransferase family. IspD subfamily. As to quaternary structure, homodimer.

The enzyme catalyses 2-C-methyl-D-erythritol 4-phosphate + CTP + H(+) = 4-CDP-2-C-methyl-D-erythritol + diphosphate. It participates in isoprenoid biosynthesis; isopentenyl diphosphate biosynthesis via DXP pathway; isopentenyl diphosphate from 1-deoxy-D-xylulose 5-phosphate: step 2/6. Functionally, catalyzes the formation of 4-diphosphocytidyl-2-C-methyl-D-erythritol from CTP and 2-C-methyl-D-erythritol 4-phosphate (MEP). The chain is 2-C-methyl-D-erythritol 4-phosphate cytidylyltransferase from Salmonella agona (strain SL483).